Here is a 325-residue protein sequence, read N- to C-terminus: UDP-N-acetylglucosamine transporter ROCK1 (325 aa).

Residues 1–13 (MATANGAKSPSSM) lie on the Cytoplasmic side of the membrane. The chain crosses the membrane as a helical span at residues 14–34 (GPKVLFYSILLTLQYGAQPLI). The Lumenal portion of the chain corresponds to 35–42 (SKRCIRKD). The chain crosses the membrane as a helical span at residues 43-63 (VIVTSSVLTCEIVKVICALIL). Residues 64–109 (MARNGSLKGLAKEWTLMGSLTASGLPAAIYALQNSLLQISYRSLDS) are Cytoplasmic-facing. Residues 110–130 (LTFSILNQTKIFFTAFFTFII) form a helical membrane-spanning segment. The Lumenal portion of the chain corresponds to 131-135 (LRQKQ). The chain crosses the membrane as a helical span at residues 136-156 (SILQIGALCLLIMAAVLLSVG). Topologically, residues 157 to 171 (EGSNKDSSGINADQK) are cytoplasmic. Residues 172-192 (LFYGIIPVLAASVLSGLASSL) traverse the membrane as a helical segment. Over 193–203 (CQWASQVKKHS) the chain is Lumenal. Residues 204–224 (SYLMTVEMSIVGSLCLLVSTL) form a helical membrane-spanning segment. The Cytoplasmic portion of the chain corresponds to 225-241 (KSPDGEAIKKYGFFHGW). The chain crosses the membrane as a helical span at residues 242 to 262 (TALTLVPVISNALGGILVGLV). The Lumenal portion of the chain corresponds to 263–270 (TSHAGGVR). The helical transmembrane segment at 271–291 (KGFVIVSALLVTALLQFAFEG) threads the bilayer. Residues 292–325 (KPPSSYCLVALPLVMSSISMYQKYPYIDKKKKKV) are Cytoplasmic-facing.

Belongs to the nucleotide-sugar transporter family. CMP-Sialate:CMP antiporter (TC 2.A.7.12) subfamily. Expressed in roots, cotyledons, leaves, stems, flowers and siliques.

Its subcellular location is the endoplasmic reticulum membrane. In terms of biological role, mediates the transport of UDP-linked acetylated hexosamines across the endoplasmic reticulum (ER) membrane. Facilitates UDP-N-acetylglucosamine (UDP-GlcNAc) and UDP-N-acetylgalactosamine (UDP-GalNAc) transport. Regulates the cytokinin signal in meristematic cells through modulating activity of cytokinin oxidases/dehydrogenases. Part of the ER quality control system, which determines the fate of aberrant proteins in the secretory pathway. This chain is UDP-N-acetylglucosamine transporter ROCK1, found in Arabidopsis thaliana (Mouse-ear cress).